We begin with the raw amino-acid sequence, 197 residues long: Holliday junction branch migration complex subunit RuvA (197 aa).

The interval Met-1 to Lys-64 is domain I. The segment at Thr-65 to Pro-145 is domain II. The segment at Ala-146–Glu-153 is flexible linker. The segment at Glu-153 to Arg-197 is domain III.

This sequence belongs to the RuvA family. Homotetramer. Forms an RuvA(8)-RuvB(12)-Holliday junction (HJ) complex. HJ DNA is sandwiched between 2 RuvA tetramers; dsDNA enters through RuvA and exits via RuvB. An RuvB hexamer assembles on each DNA strand where it exits the tetramer. Each RuvB hexamer is contacted by two RuvA subunits (via domain III) on 2 adjacent RuvB subunits; this complex drives branch migration. In the full resolvosome a probable DNA-RuvA(4)-RuvB(12)-RuvC(2) complex forms which resolves the HJ.

The protein localises to the cytoplasm. Its function is as follows. The RuvA-RuvB-RuvC complex processes Holliday junction (HJ) DNA during genetic recombination and DNA repair, while the RuvA-RuvB complex plays an important role in the rescue of blocked DNA replication forks via replication fork reversal (RFR). RuvA specifically binds to HJ cruciform DNA, conferring on it an open structure. The RuvB hexamer acts as an ATP-dependent pump, pulling dsDNA into and through the RuvAB complex. HJ branch migration allows RuvC to scan DNA until it finds its consensus sequence, where it cleaves and resolves the cruciform DNA. The sequence is that of Holliday junction branch migration complex subunit RuvA from Roseiflexus castenholzii (strain DSM 13941 / HLO8).